The sequence spans 248 residues: Ureidoacrylate amidohydrolase RutB (248 aa).

Asp-41 functions as the Proton acceptor in the catalytic mechanism. Lys-150 is a catalytic residue. Cys-183 acts as the Nucleophile in catalysis.

This sequence belongs to the isochorismatase family. RutB subfamily.

It catalyses the reaction (Z)-3-ureidoacrylate + H2O + H(+) = (Z)-3-aminoacrylate + NH4(+) + CO2. It carries out the reaction (Z)-3-ureidoacrylate + H2O = (Z)-3-aminoacrylate + carbamate + H(+). The enzyme catalyses (Z)-2-methylureidoacrylate + H2O + H(+) = (Z)-2-methylaminoacrylate + NH4(+) + CO2. In terms of biological role, hydrolyzes ureidoacrylate to form aminoacrylate and carbamate. The carbamate hydrolyzes spontaneously, thereby releasing one of the nitrogen atoms of the pyrimidine ring as ammonia and one of its carbon atoms as CO2. The chain is Ureidoacrylate amidohydrolase RutB from Methylorubrum extorquens (strain CM4 / NCIMB 13688) (Methylobacterium extorquens).